Reading from the N-terminus, the 328-residue chain is Phenylalanine--tRNA ligase alpha subunit (328 aa).

Glu253 contacts Mg(2+).

This sequence belongs to the class-II aminoacyl-tRNA synthetase family. Phe-tRNA synthetase alpha subunit type 1 subfamily. Tetramer of two alpha and two beta subunits. Mg(2+) is required as a cofactor.

It is found in the cytoplasm. The enzyme catalyses tRNA(Phe) + L-phenylalanine + ATP = L-phenylalanyl-tRNA(Phe) + AMP + diphosphate + H(+). The chain is Phenylalanine--tRNA ligase alpha subunit from Coxiella burnetii (strain Dugway 5J108-111).